The primary structure comprises 499 residues: Argininosuccinate lyase (499 aa).

Residues 1 to 22 (MSDGEDHETANADDRDETVVRR) are disordered. Over residues 7-22 (HETANADDRDETVVRR) the composition is skewed to basic and acidic residues.

Belongs to the lyase 1 family. Argininosuccinate lyase subfamily.

Its subcellular location is the cytoplasm. It carries out the reaction 2-(N(omega)-L-arginino)succinate = fumarate + L-arginine. It participates in amino-acid biosynthesis; L-arginine biosynthesis; L-arginine from L-ornithine and carbamoyl phosphate: step 3/3. The chain is Argininosuccinate lyase from Haloarcula marismortui (strain ATCC 43049 / DSM 3752 / JCM 8966 / VKM B-1809) (Halobacterium marismortui).